Reading from the N-terminus, the 932-residue chain is DNA mismatch repair protein MutS (932 aa).

615–622 (GPNMAGKS) is a binding site for ATP.

The protein belongs to the DNA mismatch repair MutS family.

Functionally, this protein is involved in the repair of mismatches in DNA. It is possible that it carries out the mismatch recognition step. This protein has a weak ATPase activity. This chain is DNA mismatch repair protein MutS, found in Clostridium botulinum (strain Hall / ATCC 3502 / NCTC 13319 / Type A).